The primary structure comprises 398 residues: Succinate--CoA ligase [ADP-forming] subunit beta (398 aa).

An ATP-grasp domain is found at 9–254 (KALLHEFGVP…ETEEDAKEIE (246 aa)). ATP-binding positions include Lys46, 53–55 (GRG), Glu109, Ser112, and Glu117. Mg(2+) is bound by residues Asn209 and Asp223. Substrate is bound by residues Asn274 and 331 to 333 (GIM).

It belongs to the succinate/malate CoA ligase beta subunit family. In terms of assembly, heterotetramer of two alpha and two beta subunits. The cofactor is Mg(2+).

The enzyme catalyses succinate + ATP + CoA = succinyl-CoA + ADP + phosphate. The catalysed reaction is GTP + succinate + CoA = succinyl-CoA + GDP + phosphate. The protein operates within carbohydrate metabolism; tricarboxylic acid cycle; succinate from succinyl-CoA (ligase route): step 1/1. Succinyl-CoA synthetase functions in the citric acid cycle (TCA), coupling the hydrolysis of succinyl-CoA to the synthesis of either ATP or GTP and thus represents the only step of substrate-level phosphorylation in the TCA. The beta subunit provides nucleotide specificity of the enzyme and binds the substrate succinate, while the binding sites for coenzyme A and phosphate are found in the alpha subunit. The sequence is that of Succinate--CoA ligase [ADP-forming] subunit beta from Bradyrhizobium sp. (strain BTAi1 / ATCC BAA-1182).